Consider the following 919-residue polypeptide: Calcium-activated chloride channel regulator 4 (919 aa).

The N-terminal stretch at 1 to 21 is a signal peptide; sequence MGLFRGFVFLLVLCLLHQSNT. A metalloprotease domain region spans residues 45 to 199; that stretch reads DEKIIEQIED…GISGRNRVYK (155 aa). Asparagine 75 is a glycosylation site (N-linked (GlcNAc...) asparagine). Residue histidine 155 participates in Zn(2+) binding. Residue glutamate 156 is part of the active site. Residues histidine 159 and aspartate 166 each coordinate Zn(2+). The region spanning 306–476 is the VWFA domain; the sequence is IVCLVLDKSG…NGLIDAFGAL (171 aa). Residues asparagine 340, asparagine 504, asparagine 542, asparagine 588, asparagine 628, asparagine 811, asparagine 832, asparagine 837, and asparagine 852 are each glycosylated (N-linked (GlcNAc...) asparagine). The segment at 870-893 is disordered; that stretch reads ANPDDIDPTPTPTPTPTPDKSHNS. Residues 895-915 form a helical membrane-spanning segment; the sequence is VNISTLVLSVIGSVVIVNFIL.

Belongs to the CLCR family. The translation product is autoproteolytically cleaved by the metalloprotease domain in the endoplasmic reticulum into a N-terminal and a C-terminal products that remain physically associated with each other. The cleavage is necessary for calcium-activated chloride channel (CaCC) activation activity. Primarily expressed in the digestive tract, mainly in colon. Detected in smaller amounts in brain, urogenital organs, testis, and salivary and mammary glands. Highly expressed in the epithelial layer and submucosal gland of the inferior turbinate mucosa. Lower levels in the epithelial layer of nasal polyp.

The protein resides in the cell membrane. Its subcellular location is the apical cell membrane. It localises to the secreted. In terms of biological role, may be involved in mediating calcium-activated chloride conductance. The protein is Calcium-activated chloride channel regulator 4 (CLCA4) of Homo sapiens (Human).